We begin with the raw amino-acid sequence, 57 residues long: Large ribosomal subunit protein bL32 (57 aa).

Residues 1–23 are disordered; it reads MAVPARHTSSAKKNRRRTHYKLT. The segment covering 9–20 has biased composition (basic residues); that stretch reads SSAKKNRRRTHY.

Belongs to the bacterial ribosomal protein bL32 family.

This chain is Large ribosomal subunit protein bL32, found in Lactococcus lactis subsp. cremoris (strain MG1363).